Here is a 568-residue protein sequence, read N- to C-terminus: 2-succinyl-5-enolpyruvyl-6-hydroxy-3-cyclohexene-1-carboxylate synthase (568 aa).

This sequence belongs to the TPP enzyme family. MenD subfamily. Homodimer. Requires Mg(2+) as cofactor. It depends on Mn(2+) as a cofactor. Thiamine diphosphate is required as a cofactor.

It carries out the reaction isochorismate + 2-oxoglutarate + H(+) = 5-enolpyruvoyl-6-hydroxy-2-succinyl-cyclohex-3-ene-1-carboxylate + CO2. Its pathway is quinol/quinone metabolism; 1,4-dihydroxy-2-naphthoate biosynthesis; 1,4-dihydroxy-2-naphthoate from chorismate: step 2/7. The protein operates within quinol/quinone metabolism; menaquinone biosynthesis. Catalyzes the thiamine diphosphate-dependent decarboxylation of 2-oxoglutarate and the subsequent addition of the resulting succinic semialdehyde-thiamine pyrophosphate anion to isochorismate to yield 2-succinyl-5-enolpyruvyl-6-hydroxy-3-cyclohexene-1-carboxylate (SEPHCHC). This Haemophilus influenzae (strain PittGG) protein is 2-succinyl-5-enolpyruvyl-6-hydroxy-3-cyclohexene-1-carboxylate synthase.